A 180-amino-acid chain; its full sequence is 5'(3')-deoxyribonucleotidase (180 aa).

The Nucleophile role is filled by Asp9. Mg(2+) contacts are provided by Asp9, Asp11, and Asp134. The active-site Proton donor is Asp11.

The protein belongs to the 5'(3')-deoxyribonucleotidase family. Mg(2+) is required as a cofactor.

In terms of biological role, dephosphorylates nucleoside monophosphates such as the 5' and 2'(3')-phosphates of deoxyribonucleotides in vitro. In Clostridium acetobutylicum (strain ATCC 824 / DSM 792 / JCM 1419 / IAM 19013 / LMG 5710 / NBRC 13948 / NRRL B-527 / VKM B-1787 / 2291 / W), this protein is 5'(3')-deoxyribonucleotidase.